A 352-amino-acid chain; its full sequence is tRNA-specific 2-thiouridylase MnmA (352 aa).

6–13 is a binding site for ATP; it reads AVSGGTDS. Cysteine 92 functions as the Nucleophile in the catalytic mechanism. Cysteine 92 and cysteine 189 are disulfide-bonded. Glycine 116 contributes to the ATP binding site. The interaction with tRNA stretch occupies residues 139 to 141; the sequence is KDQ. Residue cysteine 189 is the Cysteine persulfide intermediate of the active site. Residues 294–295 form an interaction with tRNA region; sequence RY.

It belongs to the MnmA/TRMU family.

It localises to the cytoplasm. The enzyme catalyses S-sulfanyl-L-cysteinyl-[protein] + uridine(34) in tRNA + AH2 + ATP = 2-thiouridine(34) in tRNA + L-cysteinyl-[protein] + A + AMP + diphosphate + H(+). In terms of biological role, catalyzes the 2-thiolation of uridine at the wobble position (U34) of tRNA, leading to the formation of s(2)U34. The protein is tRNA-specific 2-thiouridylase MnmA of Lawsonia intracellularis (strain PHE/MN1-00).